The chain runs to 241 residues: Methylthioribulose-1-phosphate dehydratase (241 aa).

Basic and acidic residues predominate over residues 1–12 (MSQEITQKDNND). The disordered stretch occupies residues 1-22 (MSQEITQKDNNDHLVQSSDPDH). Substrate is bound at residue cysteine 101. Residues histidine 118 and histidine 120 each coordinate Zn(2+). Catalysis depends on glutamate 147, which acts as the Proton donor/acceptor. Histidine 203 is a Zn(2+) binding site.

The protein belongs to the aldolase class II family. MtnB subfamily. The cofactor is Zn(2+).

It is found in the cytoplasm. The enzyme catalyses 5-(methylsulfanyl)-D-ribulose 1-phosphate = 5-methylsulfanyl-2,3-dioxopentyl phosphate + H2O. Its pathway is amino-acid biosynthesis; L-methionine biosynthesis via salvage pathway; L-methionine from S-methyl-5-thio-alpha-D-ribose 1-phosphate: step 2/6. Catalyzes the dehydration of methylthioribulose-1-phosphate (MTRu-1-P) into 2,3-diketo-5-methylthiopentyl-1-phosphate (DK-MTP-1-P). This is Methylthioribulose-1-phosphate dehydratase from Aspergillus terreus (strain NIH 2624 / FGSC A1156).